The following is a 26-amino-acid chain: Mu-theraphotoxin-Phlo2a (26 aa).

3 disulfide bridges follow: Cys-2–Cys-16, Cys-9–Cys-21, and Cys-15–Cys-25.

It belongs to the neurotoxin 30 (phrixotoxin) family. In terms of tissue distribution, expressed by the venom gland.

The protein localises to the secreted. Functionally, gating-modifier toxin that non-selectively inhibits voltage-gated sodium channel Nav by shifting the threshold for channel activation to more positive potentials. This toxin moderately inhibits human Nav1.2/SCN2A (IC(50)=404 nM), Nav1.5/SCN5A (IC(50)=218 nM) and Nav1.7/SCN9A (IC(50)=333 nM). Inhibition of Nav1.7 is voltage-dependent, with lower inhibition at more positive test pulses. The protein is Mu-theraphotoxin-Phlo2a of Phlogius sp. (Tarantula spider).